We begin with the raw amino-acid sequence, 886 residues long: MEKSSSSLIDPPSLSGDEIRDAFINFFVQHNHKKLASSSLIPDDPTVLLTIAGMLPFKPIFLGLKESSTPRATSSQKCIRTNDIENVGRTARHHTFFEMLGNFSFGDYFKKEAIQWAWELSTEVFRLNPQNIVISVFKEDLEAEQIWKEVVGVDANRIIRMGAADNFWSSGATGPCGPCSELYFDFKPELGSDEIDLEDDSRFIEFYNLVFMQYNRDLKGNLEPLANCHIDTGMGLERMAQILQKKSNNYETDLIFPLINAAALLAQIKYETTNKKNKTSLKIIGDHCRAVTHLICDGVSASNLGRGYILRRLIRRMIRHGRLVGIIQPFLPQLAEIAIELMKNAYPQLLEKKKIILNELKIEESRFLETLERGEKLLAEITSHECDLISGAQAFELYDTYGFPLELTEEIANEKGISVDINGFENEMAKQRKRAKEASVSIDLTEEGSIEREISLFDDTRFEGYEKLETTSTVIGIFKNNESVKQAVQGDLVKIIVNRTPFYAESGGQIGDKGLITSQDLEVSVENVRKKKNIFIHSGIVNTGVLEINSSVQMNVTPSFRQRTTSNHTATHLLQSALKLSIDSSVSQRGSLVSNHRLRFDFNAPKPLTIKELEDMEARINQWINEDHLIQIKTMPIKEAMAAGALAMFGEKYGDVVRVVDVPGISMELCGGTHVTRTSQLGTFKIINETGIASGIRRIEAIAGPSVLDYFNERDLVVKELSKSFKVQSYEIVERVSSLQLELKDKTKELIKVKNELALAKALGLATYAKSVGKSKLLIRRLDGVDGSGLQSAASSLIDHLGKYSAVIFGGIPNQEIDNKLVFVAAFSPDLVSDGLHAGKFISGVAKMCGGGGGGRPNLAQAGGSQPQSLDLALEKANENLTQQLS.

Residues histidine 568, histidine 572, cysteine 670, and histidine 674 each contribute to the Zn(2+) site.

This sequence belongs to the class-II aminoacyl-tRNA synthetase family. The cofactor is Zn(2+).

The protein localises to the cytoplasm. It carries out the reaction tRNA(Ala) + L-alanine + ATP = L-alanyl-tRNA(Ala) + AMP + diphosphate. Functionally, catalyzes the attachment of alanine to tRNA(Ala) in a two-step reaction: alanine is first activated by ATP to form Ala-AMP and then transferred to the acceptor end of tRNA(Ala). Also edits incorrectly charged Ser-tRNA(Ala) and Gly-tRNA(Ala) via its editing domain. This Prochlorococcus marinus (strain NATL2A) protein is Alanine--tRNA ligase.